A 132-amino-acid chain; its full sequence is Small ribosomal subunit protein uS8 (132 aa).

It belongs to the universal ribosomal protein uS8 family. As to quaternary structure, part of the 30S ribosomal subunit. Contacts proteins S5 and S12.

In terms of biological role, one of the primary rRNA binding proteins, it binds directly to 16S rRNA central domain where it helps coordinate assembly of the platform of the 30S subunit. In Anoxybacillus flavithermus (strain DSM 21510 / WK1), this protein is Small ribosomal subunit protein uS8.